The following is a 78-amino-acid chain: Large ribosomal subunit protein bL28 (78 aa).

It belongs to the bacterial ribosomal protein bL28 family.

This chain is Large ribosomal subunit protein bL28, found in Synechococcus sp. (strain ATCC 27144 / PCC 6301 / SAUG 1402/1) (Anacystis nidulans).